The primary structure comprises 36 residues: Cytochrome b6-f complex subunit 5 (36 aa).

A helical membrane pass occupies residues 5 to 25; sequence LLAGIVLGLVPVTLAGLFVAA.

Belongs to the PetG family. The 4 large subunits of the cytochrome b6-f complex are cytochrome b6, subunit IV (17 kDa polypeptide, PetD), cytochrome f and the Rieske protein, while the 4 small subunits are PetG, PetL, PetM and PetN. The complex functions as a dimer.

The protein resides in the cellular thylakoid membrane. In terms of biological role, component of the cytochrome b6-f complex, which mediates electron transfer between photosystem II (PSII) and photosystem I (PSI), cyclic electron flow around PSI, and state transitions. PetG is required for either the stability or assembly of the cytochrome b6-f complex. The sequence is that of Cytochrome b6-f complex subunit 5 from Acaryochloris marina (strain MBIC 11017).